Consider the following 361-residue polypeptide: Chorismate synthase (361 aa).

2 residues coordinate NADP(+): R48 and R54. Residues 125 to 127 (RSS), 238 to 239 (NA), G278, 293 to 297 (KPTSS), and R319 contribute to the FMN site.

This sequence belongs to the chorismate synthase family. As to quaternary structure, homotetramer. It depends on FMNH2 as a cofactor.

It catalyses the reaction 5-O-(1-carboxyvinyl)-3-phosphoshikimate = chorismate + phosphate. It functions in the pathway metabolic intermediate biosynthesis; chorismate biosynthesis; chorismate from D-erythrose 4-phosphate and phosphoenolpyruvate: step 7/7. Catalyzes the anti-1,4-elimination of the C-3 phosphate and the C-6 proR hydrogen from 5-enolpyruvylshikimate-3-phosphate (EPSP) to yield chorismate, which is the branch point compound that serves as the starting substrate for the three terminal pathways of aromatic amino acid biosynthesis. This reaction introduces a second double bond into the aromatic ring system. This Salmonella typhi protein is Chorismate synthase.